Reading from the N-terminus, the 292-residue chain is RNA 5'-monophosphate methyltransferase (292 aa).

The interval 1 to 22 is disordered; the sequence is MAASTEQATGGVEKTAAEEKPR. S-adenosyl-L-methionine is bound by residues arginine 46, asparagine 76, aspartate 110, 135–136, and methionine 164; that span reads DF. The Bin3-type SAM domain maps to 53–274; the sequence is ELLRRLFPQS…KQATETHPIP (222 aa).

Belongs to the methyltransferase superfamily. As to quaternary structure, interacts with DICER1; the interaction may be mediated by RNA.

The protein resides in the cytoplasm. It catalyses the reaction a 5'-end 5'-phospho-ribonucleoside-RNA + S-adenosyl-L-methionine = a 5'-end (5'-methylphospho)-ribonucleoside-RNA + S-adenosyl-L-homocysteine. The enzyme catalyses a 5'-end 5'-phospho-ribonucleoside-RNA + 2 S-adenosyl-L-methionine = a 5'-end (5'-bismethylphospho)-ribonucleoside-RNA + 2 S-adenosyl-L-homocysteine. Its function is as follows. O-methyltransferase that specifically monomethylates 5'-monophosphate of cytoplasmic histidyl tRNA (tRNA(His)), acting as a capping enzyme by protecting tRNA(His) from cleavage by DICER1. Also able, with less efficiently, to methylate the 5' monophosphate of a subset of pre-miRNAs, acting as a negative regulator of miRNA processing. The 5' monophosphate of pre-miRNAs is recognized by DICER1 and is required for pre-miRNAs processing: methylation at this position reduces the processing of pre-miRNAs by DICER1. Was also reported to mediate dimethylation of pre-miR-145; however dimethylation cannot be reproduced by another group which observes a monomethylation of pre-miR-145. In Bos taurus (Bovine), this protein is RNA 5'-monophosphate methyltransferase (BCDIN3D).